A 130-amino-acid chain; its full sequence is Protein ApaG (130 aa).

One can recognise an ApaG domain in the interval serine 3–proline 127.

This is Protein ApaG from Paramagnetospirillum magneticum (strain ATCC 700264 / AMB-1) (Magnetospirillum magneticum).